The sequence spans 427 residues: Serine--tRNA ligase (427 aa).

An L-serine-binding site is contributed by 232-234 (TAE). ATP is bound at residue 263–265 (RSE). E286 lines the L-serine pocket. Residue 350 to 353 (EISS) participates in ATP binding. S385 contacts L-serine.

The protein belongs to the class-II aminoacyl-tRNA synthetase family. Type-1 seryl-tRNA synthetase subfamily. In terms of assembly, homodimer. The tRNA molecule binds across the dimer.

It localises to the cytoplasm. The enzyme catalyses tRNA(Ser) + L-serine + ATP = L-seryl-tRNA(Ser) + AMP + diphosphate + H(+). It carries out the reaction tRNA(Sec) + L-serine + ATP = L-seryl-tRNA(Sec) + AMP + diphosphate + H(+). Its pathway is aminoacyl-tRNA biosynthesis; selenocysteinyl-tRNA(Sec) biosynthesis; L-seryl-tRNA(Sec) from L-serine and tRNA(Sec): step 1/1. Functionally, catalyzes the attachment of serine to tRNA(Ser). Is also able to aminoacylate tRNA(Sec) with serine, to form the misacylated tRNA L-seryl-tRNA(Sec), which will be further converted into selenocysteinyl-tRNA(Sec). The protein is Serine--tRNA ligase of Lacticaseibacillus casei (strain BL23) (Lactobacillus casei).